The sequence spans 44 residues: Small ribosomal subunit protein eS31 (44 aa).

Residues Cys18, Cys21, Cys35, and Cys38 each contribute to the Zn(2+) site. The segment at 18-38 (CPRCGDTVLAEHEDRQHCGKC) adopts a C4-type zinc-finger fold.

The protein belongs to the eukaryotic ribosomal protein eS31 family. In terms of assembly, part of the 30S ribosomal subunit. Zn(2+) is required as a cofactor.

In Haloarcula marismortui (strain ATCC 43049 / DSM 3752 / JCM 8966 / VKM B-1809) (Halobacterium marismortui), this protein is Small ribosomal subunit protein eS31.